Here is a 684-residue protein sequence, read N- to C-terminus: Cleavage and polyadenylation specificity factor subunit 3 (684 aa).

Ser-2 carries the N-acetylserine modification. Positions 71, 73, 75, 76, 158, and 179 each coordinate Zn(2+). His-396 serves as the catalytic Proton donor. Position 418 (His-418) interacts with Zn(2+). Residues Lys-462, Lys-465, and Lys-545 each participate in a glycyl lysine isopeptide (Lys-Gly) (interchain with G-Cter in SUMO) cross-link. A Phosphoserine modification is found at Ser-659. Phosphothreonine is present on Thr-681.

The protein belongs to the metallo-beta-lactamase superfamily. RNA-metabolizing metallo-beta-lactamase-like family. CPSF3 subfamily. Component of the cleavage and polyadenylation specificity factor (CPSF) complex, composed of CPSF1, CPSF2, CPSF3, CPSF4 and FIP1L1. Interacts with CPSF2, CSTF2 and SYMPK. Interacts with TUT1; the interaction is direct and mediates the recruitment of the CPSF complex on the 3'UTR of pre-mRNAs. Interacts with WDR33. Interacts with ZC3H3. Requires Zn(2+) as cofactor. In terms of processing, sumoylated on Lys-462, Lys-465 and Lys-545, preferentially by SUMO3.

The protein resides in the nucleus. Functionally, component of the cleavage and polyadenylation specificity factor (CPSF) complex that plays a key role in pre-mRNA 3'-end formation, recognizing the AAUAAA signal sequence and interacting with poly(A) polymerase and other factors to bring about cleavage and poly(A) addition. Has endonuclease activity, and functions as an mRNA 3'-end-processing endonuclease. Also involved in the histone 3'-end pre-mRNA processing. U7 snRNP-dependent protein that induces both the 3'-endoribonucleolytic cleavage of histone pre-mRNAs and acts as a 5' to 3' exonuclease for degrading the subsequent downstream cleavage product (DCP) of mature histone mRNAs. Cleavage occurs after the 5'-ACCCA-3' sequence in the histone pre-mRNA leaving a 3'hydroxyl group on the upstream fragment containing the stem loop (SL) and 5' phosphate on the downstream cleavage product (DCP) starting with CU nucleotides. The U7-dependent 5' to 3' exonuclease activity is processive and degrades the DCP RNA substrate even after complete removal of the U7-binding site. Binds to the downstream cleavage product (DCP) of histone pre-mRNAs and the cleaved DCP RNA substrate in a U7 snRNP dependent manner. Required for entering/progressing through S-phase of the cell cycle. Required for the selective processing of microRNAs (miRNAs) during embryonic stem cell differentiation via its interaction with ISY1. Required for the biogenesis of all miRNAs from the pri-miR-17-92 primary transcript except miR-92a. Only required for the biogenesis of miR-290 and miR-96 from the pri-miR-290-295 and pri-miR-96-183 primary transcripts, respectively. This is Cleavage and polyadenylation specificity factor subunit 3 (CPSF3) from Homo sapiens (Human).